A 29-amino-acid chain; its full sequence is U1-pseudomyrmecitoxin-Pt1 subunit SS1 (29 aa).

It belongs to the myrmexin family. In terms of assembly, heterodimer composed of subunit SS1 and subunit LS1 (U1-PSDTX-Pt1b), and heterodimer composed of subunit SS1 and LS2 (U1-PSDTX-Pt1a); disulfide-linked. Expressed by the venom gland.

Its subcellular location is the secreted. Its function is as follows. This heterodimer may have anti-inflammatory properties, since the myrmexin complex (composed of 6 SS-LS heterodimers) inhibits carrageenin-induced edema in a dose-dependent manner (after subcutaneous injection into rats). The chain is U1-pseudomyrmecitoxin-Pt1 subunit SS1 from Pseudomyrmex triplarinus (Ant).